Consider the following 147-residue polypeptide: 6-pyruvoyl tetrahydrobiopterin synthase (147 aa).

Histidine 26 serves as a coordination point for Zn(2+). The active-site Proton acceptor is cysteine 45. Zn(2+)-binding residues include histidine 51 and histidine 53. Residues histidine 92 and glutamate 136 each act as charge relay system in the active site.

It belongs to the PTPS family. As to quaternary structure, homohexamer formed of two homotrimers in a head to head fashion. The cofactor is Zn(2+).

It catalyses the reaction 7,8-dihydroneopterin 3'-triphosphate = 6-pyruvoyl-5,6,7,8-tetrahydropterin + triphosphate + H(+). It functions in the pathway cofactor biosynthesis; tetrahydrobiopterin biosynthesis; tetrahydrobiopterin from 7,8-dihydroneopterin triphosphate: step 1/3. Functionally, involved in the biosynthesis of tetrahydrobiopterin, an essential cofactor of aromatic amino acid hydroxylases. Catalyzes the transformation of 7,8-dihydroneopterin triphosphate into 6-pyruvoyl tetrahydropterin. This chain is 6-pyruvoyl tetrahydrobiopterin synthase (pts), found in Poecilia reticulata (Guppy).